A 369-amino-acid polypeptide reads, in one-letter code: UDP-N-acetylenolpyruvoylglucosamine reductase (369 aa).

One can recognise an FAD-binding PCMH-type domain in the interval Val-29 to Ser-202. Residue Arg-176 is part of the active site. The active-site Proton donor is the Ser-257. Glu-361 is a catalytic residue.

It belongs to the MurB family. The cofactor is FAD.

Its subcellular location is the cytoplasm. The catalysed reaction is UDP-N-acetyl-alpha-D-muramate + NADP(+) = UDP-N-acetyl-3-O-(1-carboxyvinyl)-alpha-D-glucosamine + NADPH + H(+). The protein operates within cell wall biogenesis; peptidoglycan biosynthesis. Cell wall formation. The chain is UDP-N-acetylenolpyruvoylglucosamine reductase from Mycobacterium tuberculosis (strain ATCC 25177 / H37Ra).